The sequence spans 325 residues: tRNA U34 carboxymethyltransferase (325 aa).

Residues K91, W105, K110, G130, 152 to 154 (DPS), M196, Y200, and R315 each bind carboxy-S-adenosyl-L-methionine.

It belongs to the class I-like SAM-binding methyltransferase superfamily. CmoB family. In terms of assembly, homotetramer.

The catalysed reaction is carboxy-S-adenosyl-L-methionine + 5-hydroxyuridine(34) in tRNA = 5-carboxymethoxyuridine(34) in tRNA + S-adenosyl-L-homocysteine + H(+). In terms of biological role, catalyzes carboxymethyl transfer from carboxy-S-adenosyl-L-methionine (Cx-SAM) to 5-hydroxyuridine (ho5U) to form 5-carboxymethoxyuridine (cmo5U) at position 34 in tRNAs. This chain is tRNA U34 carboxymethyltransferase, found in Aeromonas salmonicida (strain A449).